Reading from the N-terminus, the 100-residue chain is Large ribosomal subunit protein uL23 (100 aa).

It belongs to the universal ribosomal protein uL23 family. Part of the 50S ribosomal subunit. Contacts protein L29, and trigger factor when it is bound to the ribosome.

Its function is as follows. One of the early assembly proteins it binds 23S rRNA. One of the proteins that surrounds the polypeptide exit tunnel on the outside of the ribosome. Forms the main docking site for trigger factor binding to the ribosome. This chain is Large ribosomal subunit protein uL23, found in Mycolicibacterium paratuberculosis (strain ATCC BAA-968 / K-10) (Mycobacterium paratuberculosis).